A 107-amino-acid polypeptide reads, in one-letter code: UPF0145 protein YbjQ (107 aa).

It belongs to the UPF0145 family.

The sequence is that of UPF0145 protein YbjQ from Escherichia coli O139:H28 (strain E24377A / ETEC).